We begin with the raw amino-acid sequence, 155 residues long: Small ribosomal subunit protein uS13 (155 aa).

A compositionally biased stretch (basic residues) spans 135–145 (QHTKTTGRRGR). The segment at 135–155 (QHTKTTGRRGRTVGVSRTKGA) is disordered. Low complexity predominate over residues 146–155 (TVGVSRTKGA).

Belongs to the universal ribosomal protein uS13 family. Component of the small ribosomal subunit.

Its subcellular location is the cytoplasm. Component of the small ribosomal subunit. The ribosome is a large ribonucleoprotein complex responsible for the synthesis of proteins in the cell. The chain is Small ribosomal subunit protein uS13 (RPS18) from Entamoeba histolytica (strain ATCC 30459 / HM-1:IMSS / ABRM).